A 137-amino-acid chain; its full sequence is Large ribosomal subunit protein uL16 (137 aa).

This sequence belongs to the universal ribosomal protein uL16 family. In terms of assembly, part of the 50S ribosomal subunit.

Functionally, binds 23S rRNA and is also seen to make contacts with the A and possibly P site tRNAs. This Agrobacterium fabrum (strain C58 / ATCC 33970) (Agrobacterium tumefaciens (strain C58)) protein is Large ribosomal subunit protein uL16.